Consider the following 143-residue polypeptide: MGKPRGLRTARKLKNHRREQRWHDKDYKKSHLGTRWKSNPFGGASHAKGIVLEKVGVEAKQPNSAIRKCVRVQLIKNGKKITAFVPRDGCLNFIEENDEVLVAGFGRKGHAVGDIPGVRFKVVKVASVSLLALYKQKKERPRS.

The segment covering 1-20 has biased composition (basic residues); that stretch reads MGKPRGLRTARKLKNHRREQ. The tract at residues 1–28 is disordered; the sequence is MGKPRGLRTARKLKNHRREQRWHDKDYK. A Hydroxyproline modification is found at Pro62.

The protein belongs to the universal ribosomal protein uS12 family. In terms of assembly, component of the 40S small ribosomal subunit.

It localises to the cytoplasm. Its subcellular location is the cytosol. The protein resides in the rough endoplasmic reticulum. The protein is Small ribosomal subunit protein uS12 (RPS23) of Lumbricus rubellus (Humus earthworm).